A 761-amino-acid polypeptide reads, in one-letter code: uncharacterized protein (761 aa).

N-acetylmethionine is present on methionine 1. Disordered regions lie at residues 1–82 (MEHQ…SSSS), 229–320 (SNII…SALA), and 590–640 (FNRA…PEQQ). Residues 13 to 27 (NSGSNRVTVYNGTTL) are compositionally biased toward polar residues. The segment covering 28 to 45 (PTMPKSATPTSSSTTVTT) has biased composition (low complexity). Composition is skewed to polar residues over residues 244 to 259 (TPVS…SSPE), 266 to 276 (NTTSSSSTSDH), 590 to 604 (FNRA…STDD), and 627 to 640 (SKNS…PEQQ).

Post-translationally, phosphorylated by CDC28.

This is an uncharacterized protein from Saccharomyces cerevisiae (strain ATCC 204508 / S288c) (Baker's yeast).